Here is a 560-residue protein sequence, read N- to C-terminus: DNA ligase B (560 aa).

The active-site N6-AMP-lysine intermediate is Lys124.

Belongs to the NAD-dependent DNA ligase family. LigB subfamily.

The catalysed reaction is NAD(+) + (deoxyribonucleotide)n-3'-hydroxyl + 5'-phospho-(deoxyribonucleotide)m = (deoxyribonucleotide)n+m + AMP + beta-nicotinamide D-nucleotide.. Its function is as follows. Catalyzes the formation of phosphodiester linkages between 5'-phosphoryl and 3'-hydroxyl groups in double-stranded DNA using NAD as a coenzyme and as the energy source for the reaction. The polypeptide is DNA ligase B (Shigella flexneri serotype 5b (strain 8401)).